The following is a 126-amino-acid chain: Holo-[acyl-carrier-protein] synthase (126 aa).

Mg(2+) is bound by residues Asp-9 and Glu-58.

It belongs to the P-Pant transferase superfamily. AcpS family. The cofactor is Mg(2+).

It is found in the cytoplasm. It carries out the reaction apo-[ACP] + CoA = holo-[ACP] + adenosine 3',5'-bisphosphate + H(+). Functionally, transfers the 4'-phosphopantetheine moiety from coenzyme A to a Ser of acyl-carrier-protein. The sequence is that of Holo-[acyl-carrier-protein] synthase from Shewanella frigidimarina (strain NCIMB 400).